The chain runs to 621 residues: tRNA uridine 5-carboxymethylaminomethyl modification enzyme MnmG (621 aa).

Position 17-22 (17-22 (GGGHAG)) interacts with FAD. 276 to 290 (GPRYCPSIEDKIMKF) is a binding site for NAD(+).

The protein belongs to the MnmG family. In terms of assembly, homodimer. Heterotetramer of two MnmE and two MnmG subunits. The cofactor is FAD.

It localises to the cytoplasm. NAD-binding protein involved in the addition of a carboxymethylaminomethyl (cmnm) group at the wobble position (U34) of certain tRNAs, forming tRNA-cmnm(5)s(2)U34. The chain is tRNA uridine 5-carboxymethylaminomethyl modification enzyme MnmG from Zymomonas mobilis subsp. mobilis (strain ATCC 31821 / ZM4 / CP4).